We begin with the raw amino-acid sequence, 190 residues long: CD70 antigen (190 aa).

At M1–S17 the chain is on the cytoplasmic side. The chain crosses the membrane as a helical span at residues I18–G38. Residues Q39–P190 lie on the Extracellular side of the membrane. Positions D52–V188 constitute a THD domain. N-linked (GlcNAc...) asparagine glycosylation is found at N59 and N110. 2 cysteine pairs are disulfide-bonded: C111–C148 and C130–C165. The N-linked (GlcNAc...) asparagine glycan is linked to N167.

The protein belongs to the tumor necrosis factor family. As to quaternary structure, homotrimer. N-glycosylated.

The protein resides in the cell membrane. Expressed at the plasma membrane of B cells, it is the ligand of the CD27 receptor which is specifically expressed at the surface of T cells. The CD70-CD27 signaling pathway mediates antigen-specific T cell activation and expansion which in turn provides immune surveillance of B cells. This is CD70 antigen from Sus scrofa (Pig).